Here is a 31-residue protein sequence, read N- to C-terminus: Cycloviolin-A (31 aa).

The segment at residues 1-31 (GVIPCGESCVFIPCISAAIGCSCKNKVCYRN) is a cross-link (cyclopeptide (Gly-Asn)). Cystine bridges form between cysteine 5-cysteine 21, cysteine 9-cysteine 23, and cysteine 14-cysteine 28.

This is a cyclic peptide.

In terms of biological role, probably participates in a plant defense mechanism. Has anti-HIV activity. The polypeptide is Cycloviolin-A (Leonia cymosa (Sacha uba)).